The chain runs to 417 residues: Sterile alpha motif domain-containing protein 14 (417 aa).

Disordered regions lie at residues Leu-37–Ala-299 and Ala-388–Ser-417. Basic residues predominate over residues Lys-40–Ser-49. Phosphoserine is present on residues Ser-84 and Ser-108. The span at Ala-135–Ser-153 shows a compositional bias: low complexity. Residues Arg-160 to Ser-173 show a composition bias toward basic and acidic residues. Residues Ser-173 and Ser-179 each carry the phosphoserine modification. Composition is skewed to low complexity over residues Ser-244–Ser-260 and Ser-276–Pro-295. Ser-279 carries the post-translational modification Phosphoserine. Thr-283 is modified (phosphothreonine). In terms of domain architecture, SAM spans Trp-326–Ala-389. Residues Ala-377–Ser-417 adopt a coiled-coil conformation. Basic and acidic residues predominate over residues Ala-390 to Ser-417.

In Homo sapiens (Human), this protein is Sterile alpha motif domain-containing protein 14 (SAMD14).